Here is a 156-residue protein sequence, read N- to C-terminus: Ribosomal RNA large subunit methyltransferase H (156 aa).

S-adenosyl-L-methionine-binding positions include leucine 73, glycine 104, and 123–128 (LSPLTL).

It belongs to the RNA methyltransferase RlmH family. As to quaternary structure, homodimer.

It is found in the cytoplasm. It carries out the reaction pseudouridine(1915) in 23S rRNA + S-adenosyl-L-methionine = N(3)-methylpseudouridine(1915) in 23S rRNA + S-adenosyl-L-homocysteine + H(+). Functionally, specifically methylates the pseudouridine at position 1915 (m3Psi1915) in 23S rRNA. This is Ribosomal RNA large subunit methyltransferase H from Yersinia pseudotuberculosis serotype O:1b (strain IP 31758).